The sequence spans 168 residues: NADH-quinone oxidoreductase subunit B (168 aa).

[4Fe-4S] cluster-binding residues include Cys49, Cys50, Cys114, and Cys144.

Belongs to the complex I 20 kDa subunit family. In terms of assembly, NDH-1 is composed of 14 different subunits. Subunits NuoB, C, D, E, F, and G constitute the peripheral sector of the complex. [4Fe-4S] cluster is required as a cofactor.

The protein resides in the cell membrane. It carries out the reaction a quinone + NADH + 5 H(+)(in) = a quinol + NAD(+) + 4 H(+)(out). Functionally, NDH-1 shuttles electrons from NADH, via FMN and iron-sulfur (Fe-S) centers, to quinones in the respiratory chain. Couples the redox reaction to proton translocation (for every two electrons transferred, four hydrogen ions are translocated across the cytoplasmic membrane), and thus conserves the redox energy in a proton gradient. This chain is NADH-quinone oxidoreductase subunit B, found in Wolbachia sp. subsp. Brugia malayi (strain TRS).